The sequence spans 359 residues: Putative plant UBX domain-containing protein 15 (359 aa).

One can recognise a UBX domain in the interval 277–357 (DRSVVCSISV…GIANSIISVT (81 aa)).

In Arabidopsis thaliana (Mouse-ear cress), this protein is Putative plant UBX domain-containing protein 15.